The sequence spans 329 residues: Tyrosine recombinase XerC 1 (329 aa).

The Core-binding (CB) domain occupies 14–101 (APPHPQIGAY…AWRGWYQWLA (88 aa)). In terms of domain architecture, Tyr recombinase spans 123–320 (RLPKALSVEQ…DFQHLAKIYD (198 aa)). Residues Arg163, Lys198, His272, Arg275, and His298 contribute to the active site. Catalysis depends on Tyr307, which acts as the O-(3'-phospho-DNA)-tyrosine intermediate.

This sequence belongs to the 'phage' integrase family. XerC subfamily. Forms a cyclic heterotetrameric complex composed of two molecules of XerC and two molecules of XerD.

The protein localises to the cytoplasm. Functionally, site-specific tyrosine recombinase, which acts by catalyzing the cutting and rejoining of the recombining DNA molecules. The XerC-XerD complex is essential to convert dimers of the bacterial chromosome into monomers to permit their segregation at cell division. It also contributes to the segregational stability of plasmids. In Ralstonia nicotianae (strain ATCC BAA-1114 / GMI1000) (Ralstonia solanacearum), this protein is Tyrosine recombinase XerC 1 (xerC1).